We begin with the raw amino-acid sequence, 263 residues long: uncharacterized protein (263 aa).

Gly-31–Thr-38 provides a ligand contact to ATP.

It belongs to the CbbQ/NirQ/NorQ/GpvN family.

This is an uncharacterized protein from Staphylococcus saprophyticus subsp. saprophyticus (strain ATCC 15305 / DSM 20229 / NCIMB 8711 / NCTC 7292 / S-41).